Reading from the N-terminus, the 266-residue chain is MIEKLILGRFVPGESLIHGLDARTKLLAGFYYIGILFLANNWWTYALMVLFTLMVVQMTGIKLKVFIKGVKPLIWLILFTVVMQILFASGGTIYFDWGPFTISSFGLLNGVFVFLRFVLIIIMSTVITLTTTPMNLTDAIAYILRPFAVLKVPVNDIALMISVALRFIPTLMGETDKIMKAQRARGVDFGEGNLFEQMKVVVPIFIPLFVSSFNRAEELADAMEARGYQGGEGRTRFRILHWHFGDLIAACVMILLTAGLVILRTS.

5 helical membrane passes run Ile-33–Leu-53, Leu-73–Ile-93, Leu-107–Ile-127, Val-152–Met-172, and His-243–Leu-263.

The protein belongs to the energy-coupling factor EcfT family. In terms of assembly, forms a stable energy-coupling factor (ECF) transporter complex composed of 2 membrane-embedded substrate-binding proteins (S component), 2 ATP-binding proteins (A component) and 2 transmembrane proteins (T component). May be able to interact with more than 1 S component at a time.

Its subcellular location is the cell membrane. In terms of biological role, transmembrane (T) component of an energy-coupling factor (ECF) ABC-transporter complex. Unlike classic ABC transporters this ECF transporter provides the energy necessary to transport a number of different substrates. The polypeptide is Energy-coupling factor transporter transmembrane protein EcfT 1 (Listeria monocytogenes serotype 1/2a (strain 08-5578)).